A 509-amino-acid chain; its full sequence is Aromatase (509 aa).

Residue Cys437 coordinates heme.

Belongs to the cytochrome P450 family. Requires heme as cofactor.

The protein resides in the membrane. The enzyme catalyses testosterone + 3 reduced [NADPH--hemoprotein reductase] + 3 O2 = 17beta-estradiol + formate + 3 oxidized [NADPH--hemoprotein reductase] + 4 H2O + 4 H(+). It carries out the reaction androst-4-ene-3,17-dione + 3 reduced [NADPH--hemoprotein reductase] + 3 O2 = estrone + formate + 3 oxidized [NADPH--hemoprotein reductase] + 4 H2O + 4 H(+). Functionally, catalyzes the formation of aromatic C18 estrogens from C19 androgens. The chain is Aromatase (CYP19A1) from Taeniopygia guttata (Zebra finch).